A 456-amino-acid polypeptide reads, in one-letter code: Glycerol-3-phosphate acyltransferase 4 (456 aa).

The first 37 residues, 1-37 (MFLLLPFDSLIVNLLGISLTVLFTLLLVFIIVPAIFG), serve as a signal peptide directing secretion. 2 consecutive transmembrane segments (helical) span residues 156 to 176 (ISLR…CFLL) and 180 to 200 (IALA…VGYL). Residue Asn247 is glycosylated (N-linked (GlcNAc...) asparagine). An HXXXXD motif motif is present at residues 248–253 (HTSPID). N-linked (GlcNAc...) asparagine glycans are attached at residues Asn327, Asn328, and Asn362.

The protein belongs to the 1-acyl-sn-glycerol-3-phosphate acyltransferase family. Highly expressed in testis.

It localises to the endoplasmic reticulum membrane. The enzyme catalyses sn-glycerol 3-phosphate + an acyl-CoA = a 1-acyl-sn-glycero-3-phosphate + CoA. The catalysed reaction is dodecanoyl-CoA + sn-glycerol 3-phosphate = 1-dodecanoyl-sn-glycerol 3-phosphate + CoA. It carries out the reaction sn-glycerol 3-phosphate + hexadecanoyl-CoA = 1-hexadecanoyl-sn-glycero-3-phosphate + CoA. It catalyses the reaction sn-glycerol 3-phosphate + octadecanoyl-CoA = 1-octadecanoyl-sn-glycero-3-phosphate + CoA. The enzyme catalyses sn-glycerol 3-phosphate + (9Z)-octadecenoyl-CoA = 1-(9Z-octadecenoyl)-sn-glycero-3-phosphate + CoA. The catalysed reaction is (9Z,12Z)-octadecadienoyl-CoA + sn-glycerol 3-phosphate = 1-(9Z,12Z)-octadecadienoyl-sn-glycero-3-phosphate + CoA. The protein operates within phospholipid metabolism; CDP-diacylglycerol biosynthesis; CDP-diacylglycerol from sn-glycerol 3-phosphate: step 1/3. In terms of biological role, converts glycerol-3-phosphate to 1-acyl-sn-glycerol-3-phosphate (lysophosphatidic acid or LPA) by incorporating an acyl moiety at the sn-1 position of the glycerol backbone. Active against both saturated and unsaturated long-chain fatty acyl-CoAs. Protects cells against lipotoxicity. This is Glycerol-3-phosphate acyltransferase 4 from Mus musculus (Mouse).